The chain runs to 71 residues: Protein MMP24OS (71 aa).

The segment covering 1–10 has biased composition (gly residues); the sequence is MGAQLSGGRG. The disordered stretch occupies residues 1–61; it reads MGAQLSGGRG…PSPWGPLDDV (61 aa). Residues 36 to 55 are compositionally biased toward pro residues; sequence HPPQPQPQPQPQPQPEPSPW.

This Homo sapiens (Human) protein is Protein MMP24OS.